We begin with the raw amino-acid sequence, 412 residues long: Keratin, type I microfibrillar 48 kDa, component 8C-1 (412 aa).

The residue at position 1 (Ser1) is an N-acetylserine. A head region spans residues 1–55; sequence SFNFCLPNLSFRSSCSSRPCVPSSCCGTTLPGACNIPANVGSCNWFCEGSFDGNE. The IF rod domain occupies 55-366; sequence EKETMQFLND…GLLDSEDCKL (312 aa). The interval 56-90 is coil 1A; that stretch reads KETMQFLNDRLASYLEKVRQLERENAELESRILER. Residues 91–101 form a linker 1 region; that stretch reads SQQQEPLVCPN. The segment at 102–202 is coil 1B; that stretch reads YQSYFRTIEE…HEEEVNTLRS (101 aa). The segment at 203 to 218 is linker 12; it reads QLGDRLNVEVDAAPTV. A coil 2 region spans residues 219 to 362; it reads DLNRVLNETR…NTYRGLLDSE (144 aa). The tract at residues 363–412 is tail; it reads DCKLPCNPCATTNACGKTITPCISSPCAPAAPCTPCVPRSRCGPCNSYVR.

It belongs to the intermediate filament family.

Its function is as follows. Wool microfibrillar keratin. This is Keratin, type I microfibrillar 48 kDa, component 8C-1 from Ovis aries (Sheep).